The chain runs to 478 residues: UDP-N-acetylmuramate--L-alanine ligase (478 aa).

Position 112–118 (glycine 112–threonine 118) interacts with ATP.

Belongs to the MurCDEF family.

It is found in the cytoplasm. It catalyses the reaction UDP-N-acetyl-alpha-D-muramate + L-alanine + ATP = UDP-N-acetyl-alpha-D-muramoyl-L-alanine + ADP + phosphate + H(+). Its pathway is cell wall biogenesis; peptidoglycan biosynthesis. Its function is as follows. Cell wall formation. This Polaromonas naphthalenivorans (strain CJ2) protein is UDP-N-acetylmuramate--L-alanine ligase.